A 185-amino-acid polypeptide reads, in one-letter code: MTPPREEVVLLAEDGAPIGTADKATVHSESTPLHLAFSCHLFDGDGRILVTRRALGKATWPGVWTNSFCGHPALGESLEEAIARRAHEELGTSVDALALALALPDFRYRAVDATGVVEHEMCPVYTATIAWELRPSADEVAEWEWADPRALLSSVAATPWAFSPWLTLQLPALYAASGDQPSGQL.

Mn(2+) contacts are provided by H27 and H34. The Nudix hydrolase domain occupies 32-168 (PLHLAFSCHL…PWAFSPWLTL (137 aa)). The active site involves C69. Position 69 (C69) interacts with Mg(2+). A Mn(2+)-binding site is contributed by H71. E89 contacts Mg(2+). Mn(2+) contacts are provided by E118 and E120. E120 is an active-site residue.

Belongs to the IPP isomerase type 1 family. It depends on Mg(2+) as a cofactor. The cofactor is Mn(2+).

It is found in the cytoplasm. The enzyme catalyses isopentenyl diphosphate = dimethylallyl diphosphate. Its pathway is isoprenoid biosynthesis; dimethylallyl diphosphate biosynthesis; dimethylallyl diphosphate from isopentenyl diphosphate: step 1/1. Its function is as follows. Catalyzes the 1,3-allylic rearrangement of the homoallylic substrate isopentenyl (IPP) to its highly electrophilic allylic isomer, dimethylallyl diphosphate (DMAPP). The polypeptide is Isopentenyl-diphosphate Delta-isomerase (Leifsonia xyli subsp. xyli (strain CTCB07)).